The chain runs to 546 residues: Phenylalanine--tRNA ligase beta subunit (546 aa).

The 77-residue stretch at 266-342 folds into the B5 domain; the sequence is LAPAERVVSV…IAYGIENFDA (77 aa). Mg(2+) contacts are provided by Asp-320, Asp-326, Glu-329, and Asp-330.

Belongs to the phenylalanyl-tRNA synthetase beta subunit family. Type 2 subfamily. Tetramer of two alpha and two beta subunits. Mg(2+) serves as cofactor.

Its subcellular location is the cytoplasm. It carries out the reaction tRNA(Phe) + L-phenylalanine + ATP = L-phenylalanyl-tRNA(Phe) + AMP + diphosphate + H(+). In Methanoculleus marisnigri (strain ATCC 35101 / DSM 1498 / JR1), this protein is Phenylalanine--tRNA ligase beta subunit.